The chain runs to 896 residues: MKKLSTNQIRKIWLDFFISKNHYFLETVSLIPVDDPSLLWINSGVATLKPYFDGRKTPPSPRLTNSQKAIRTNDIENVGVTARHHTMFEMLGNFSIGDYFKKEAIELAWELLTDKKYFDIDKNKLYITVFNEDTEAYNIWKDVIKIDEDHIFRLSRKTNFWDVGQGPCGPNTEIFYDRGEIWDPNKIGPRLISDDIENDRYIEVWNIVFSQFNNDGNNNYVELPRKNIDTGAGLERFASIFQNTPTNFETDIFYPTIKKVEQLTNNQFKYSIDNYFNPNKKQTRINTAFKVIADHIRATVFAISDGVFPGNKDRGYIIRRLIRRSCVFGKELGIKQAFLYKLVDSVIESMKEFYPYLIDKKTLVEQTIKDEEEKFLKTLSKGYDLLENIIKTKNTVSDKDALLLFESYGFPIEQTIEISELSNVTVDVEGFKKLLEQTKQATRNARKDLKAWDKQNELFTKLKVESEFTGWSETSRDNAKVIYMFTDQKQVESITNQEVFVILDKTPFYAEKGGQAADSGIIFNDQMKGFVIDVQQGPTHQNIHRIKVQGTLKVNDLINCRVDEEKRIYTMKNHSGTHMIHYALREVLGTSVMQSGSYNDENGLRMDFTYHRLPTNQELLKAQNLVLEKIKNKIDRQTYFCSLEESVKKHQALAFFTEKYDQIVRVIKFGDFSSELCGGTHVNNTSEIEDFIITGIESKGSGLYRIKCLTSFRAVNEYLNEQFKVYKDQAESIIDKYNQNKDLLKNDQLENIYLQIKNTTINKDNLLVIKNLLDQSKEVNKDYDKKVNDLITANKLLKYKDLTPSLNKDNINEIRLETTDLNIKDLKQLADDLRNKYNDLIVILLSSTNENTFIVVAVSQSLQNKYKAIDIFNNLEGYETKGGGNANLAQGKFVKK.

The Zn(2+) site is built by histidine 574, histidine 578, cysteine 677, and histidine 681.

It belongs to the class-II aminoacyl-tRNA synthetase family. It depends on Zn(2+) as a cofactor.

Its subcellular location is the cytoplasm. The catalysed reaction is tRNA(Ala) + L-alanine + ATP = L-alanyl-tRNA(Ala) + AMP + diphosphate. Its function is as follows. Catalyzes the attachment of alanine to tRNA(Ala) in a two-step reaction: alanine is first activated by ATP to form Ala-AMP and then transferred to the acceptor end of tRNA(Ala). Also edits incorrectly charged Ser-tRNA(Ala) and Gly-tRNA(Ala) via its editing domain. The protein is Alanine--tRNA ligase of Mycoplasma mycoides subsp. mycoides SC (strain CCUG 32753 / NCTC 10114 / PG1).